Here is a 235-residue protein sequence, read N- to C-terminus: Large ribosomal subunit protein uL1 (235 aa).

Belongs to the universal ribosomal protein uL1 family. Part of the 50S ribosomal subunit.

Binds directly to 23S rRNA. The L1 stalk is quite mobile in the ribosome, and is involved in E site tRNA release. Its function is as follows. Protein L1 is also a translational repressor protein, it controls the translation of the L11 operon by binding to its mRNA. The sequence is that of Large ribosomal subunit protein uL1 from Prochlorococcus marinus (strain MIT 9303).